We begin with the raw amino-acid sequence, 350 residues long: MFKVFPFTAIGHPHAITAPRLVVKMSAIATKNAVESLVVKPPAHPTYDLKGVIQLALSEDAGDLGDVTCKATIPVVMESEAHFLAKEDGIVAGIALAEMIFAEVDPSLKMEWSISDGDKVHKGLKFGKVQGKAHSIVIAERVVLNFMQRMSGIATLTKAMADAAHPATILETRKTAPGLRLVDKWAVLIGGGKNHRMGLFDMVMIKDNHISAAGGVSKALNSVDQYLEQNKLQMGVEVETRTIAEVLEVLDYASRTKTSLTRIMLDNMVVPLSDGDIEVSMLNEAVDLINGRFETEASGNVTLETVHKIGQTGVTYISSGALTHSVKALDISLKIDTELALEVGRRTKRA.

Substrate contacts are provided by residues Arg141, 172–174 (TRK), Arg196, Lys206, Glu239, Asp266, 298–300 (SGN), and 319–321 (SGA).

The protein belongs to the NadC/ModD family.

It catalyses the reaction nicotinate beta-D-ribonucleotide + CO2 + diphosphate = quinolinate + 5-phospho-alpha-D-ribose 1-diphosphate + 2 H(+). It participates in alkaloid biosynthesis; nicotine biosynthesis. It functions in the pathway cofactor biosynthesis; NAD(+) biosynthesis; nicotinate D-ribonucleotide from quinolinate: step 1/1. Its function is as follows. Involved in the biosynthesis of pyridine alkaloid natural products, leading mainly to the production of anabasine, anatabine, nicotine and nornicotine, effective deterrents against herbivores with antiparasitic and pesticide properties (neurotoxins); nornicotine serves as the precursor in the synthesis of the carcinogen compound N'-nitrosonornicotine (NNN). Involved in the catabolism of quinolinic acid (QA). This is Quinolinate phosphoribosyltransferase [decarboxylating] 1 from Nicotiana glauca (Glaucous tobacco).